Here is a 250-residue protein sequence, read N- to C-terminus: MMNIVENQTVVRRAPDNAGEERVLAARPEAIGFTPQQTALIVVDMQNAYASQGGYLDLAGFDVSATAPVIANIKVAIAAARAAGIKVIFFQNGWDNQYVEAGGRARPTSINPMRLKTMRKRPELMGKLLAKGDWDYDLVDELQPQPGDIVLPKPRYSGFFNTQLDSLLRSYGIHHLVFTGIATNVCVESTLRDGFFLEYFGVVLEDATHQAGPEFAQKAAIYNIETFFGWVSSVSHFCDAVGYKTEQNAA.

Residue aspartate 44 is the Proton acceptor of the active site. The active site involves lysine 153. Cysteine 186 serves as the catalytic Nucleophile.

This sequence belongs to the isochorismatase family. RutB subfamily.

It carries out the reaction (Z)-3-ureidoacrylate + H2O + H(+) = (Z)-3-aminoacrylate + NH4(+) + CO2. The enzyme catalyses (Z)-3-ureidoacrylate + H2O = (Z)-3-aminoacrylate + carbamate + H(+). The catalysed reaction is (Z)-2-methylureidoacrylate + H2O + H(+) = (Z)-2-methylaminoacrylate + NH4(+) + CO2. Hydrolyzes ureidoacrylate to form aminoacrylate and carbamate. The carbamate hydrolyzes spontaneously, thereby releasing one of the nitrogen atoms of the pyrimidine ring as ammonia and one of its carbon atoms as CO2. The chain is Ureidoacrylate amidohydrolase RutB from Pantoea ananatis (strain LMG 20103).